The primary structure comprises 227 residues: MTAIAPVITIDGPSGAGKGTLCKAMAEALQWHLLDSGAIYRVLALAALHHHVDVASEDALVPLASHLDVRFVSTNGNLEVILEGEDVSGEIRTQEVANAASQVAAFPRVREALLRRQRAFRELPGLIADGRDMGTVVFPDAPVKIFLDASSEERAHRRMLQLQEKGFSVNFERLLAEIKERDDRDRNRAVAPLVPAADALVLDSTTLSIEQVIEKALQYARQKLALA.

12–20 (GPSGAGKGT) lines the ATP pocket.

It belongs to the cytidylate kinase family. Type 1 subfamily.

The protein resides in the cytoplasm. It carries out the reaction CMP + ATP = CDP + ADP. It catalyses the reaction dCMP + ATP = dCDP + ADP. The protein is Cytidylate kinase of Shigella boydii serotype 18 (strain CDC 3083-94 / BS512).